The following is a 632-amino-acid chain: Threonine--tRNA ligase (632 aa).

Positions 1-61 (MPIVTLPDGS…EHDAEVSILT (61 aa)) constitute a TGS domain. The interval 242 to 533 (DHRKLARKLD…LIEHYAGSMP (292 aa)) is catalytic. 3 residues coordinate Zn(2+): Cys333, His384, and His510.

Belongs to the class-II aminoacyl-tRNA synthetase family. In terms of assembly, homodimer. Zn(2+) serves as cofactor.

Its subcellular location is the cytoplasm. It catalyses the reaction tRNA(Thr) + L-threonine + ATP = L-threonyl-tRNA(Thr) + AMP + diphosphate + H(+). Functionally, catalyzes the attachment of threonine to tRNA(Thr) in a two-step reaction: L-threonine is first activated by ATP to form Thr-AMP and then transferred to the acceptor end of tRNA(Thr). Also edits incorrectly charged L-seryl-tRNA(Thr). The chain is Threonine--tRNA ligase from Chromohalobacter salexigens (strain ATCC BAA-138 / DSM 3043 / CIP 106854 / NCIMB 13768 / 1H11).